The chain runs to 421 residues: UDP-N-acetylglucosamine 1-carboxyvinyltransferase 1 (421 aa).

Residue 22-23 participates in phosphoenolpyruvate binding; it reads KN. A UDP-N-acetyl-alpha-D-glucosamine-binding site is contributed by R95. The Proton donor role is filled by C119. A 2-(S-cysteinyl)pyruvic acid O-phosphothioketal modification is found at C119. Residues 124 to 128, D308, and V330 contribute to the UDP-N-acetyl-alpha-D-glucosamine site; that span reads RPIEQ.

Belongs to the EPSP synthase family. MurA subfamily.

The protein localises to the cytoplasm. The catalysed reaction is phosphoenolpyruvate + UDP-N-acetyl-alpha-D-glucosamine = UDP-N-acetyl-3-O-(1-carboxyvinyl)-alpha-D-glucosamine + phosphate. It functions in the pathway cell wall biogenesis; peptidoglycan biosynthesis. In terms of biological role, cell wall formation. Adds enolpyruvyl to UDP-N-acetylglucosamine. The sequence is that of UDP-N-acetylglucosamine 1-carboxyvinyltransferase 1 from Staphylococcus aureus (strain MRSA252).